A 414-amino-acid polypeptide reads, in one-letter code: TnpB-like protein MJ1635 (414 aa).

Zn(2+)-binding residues include Cys-329, Cys-332, Cys-346, and Cys-349.

The protein in the N-terminal section; belongs to the transposase 2 family. It in the C-terminal section; belongs to the transposase 35 family.

The chain is TnpB-like protein MJ1635 from Methanocaldococcus jannaschii (strain ATCC 43067 / DSM 2661 / JAL-1 / JCM 10045 / NBRC 100440) (Methanococcus jannaschii).